A 402-amino-acid polypeptide reads, in one-letter code: MKETGIELMKNTKSVRDIDVKDKRVLIRVDFNVPMDEDFDISDDTRIREALPTINYCIDNHAQNIVLVSHLGRPKGRNAEFSLKHVLKRVERLLGRDIAFAETIENVENLQQQSKSGSVILLENIRFYEGEEKNDEELSTKLASICDVYINDAFGTSHRAHSSTCGIAKYAKECVAGLLLKKEIDSFAKAMANPLKPVLLIVGGSKVSSKLALLYNILDVVDKIIIGGAMSNTFLKARGFDMQKSLVEDDLVSEARKILDKAKEKKVKIYLPVDVVSTDDIKEHRHIKITPAQDIPEGFMAVDMGPATSKLFSEVVRDSQTIIWNGPLGIYEIQAFSRGTFNLAHAVSDTYAFSLIGGGDTADAIDKAGERDNMSFISTGGGASLELLEGKILPAFEVLERK.

Substrate contacts are provided by residues 30 to 32, Arg-46, 70 to 73, Arg-126, and Arg-159; these read DFN and HLGR. ATP-binding positions include Lys-210, Glu-332, and 358-361; that span reads GGDT.

The protein belongs to the phosphoglycerate kinase family. In terms of assembly, monomer.

Its subcellular location is the cytoplasm. The catalysed reaction is (2R)-3-phosphoglycerate + ATP = (2R)-3-phospho-glyceroyl phosphate + ADP. It participates in carbohydrate degradation; glycolysis; pyruvate from D-glyceraldehyde 3-phosphate: step 2/5. The polypeptide is Phosphoglycerate kinase (Helicobacter hepaticus (strain ATCC 51449 / 3B1)).